Here is a 196-residue protein sequence, read N- to C-terminus: Protein LSM12 homolog A (196 aa).

A Sm domain is found at 3-73 (APGPGEYFSV…VSEVDIINDR (71 aa)). In terms of domain architecture, AD spans 81–175 (ASLNISKLAN…IVEKHFRDVE (95 aa)). The segment at 174 to 196 (VESQKTMQRSQAQQTQKDSSLSS) is disordered. Positions 177–196 (QKTMQRSQAQQTQKDSSLSS) are enriched in polar residues.

Belongs to the LSM12 family.

The protein is Protein LSM12 homolog A (lsm12a) of Danio rerio (Zebrafish).